The following is a 339-amino-acid chain: Dihydroorotate dehydrogenase (quinone) (339 aa).

Residues 62–66 (AGMDK) and T86 each bind FMN. K66 contributes to the substrate binding site. 111–115 (NRMGF) is a substrate binding site. FMN contacts are provided by N139 and N172. N172 serves as a coordination point for substrate. Residue S175 is the Nucleophile of the active site. Position 177 (N177) interacts with substrate. Residues K217 and T245 each contribute to the FMN site. Residue 246-247 (NT) participates in substrate binding. FMN-binding positions include G268, G297, and 318–319 (YS).

This sequence belongs to the dihydroorotate dehydrogenase family. Type 2 subfamily. Monomer. FMN serves as cofactor.

The protein localises to the cell membrane. It carries out the reaction (S)-dihydroorotate + a quinone = orotate + a quinol. The protein operates within pyrimidine metabolism; UMP biosynthesis via de novo pathway; orotate from (S)-dihydroorotate (quinone route): step 1/1. Its function is as follows. Catalyzes the conversion of dihydroorotate to orotate with quinone as electron acceptor. In Shewanella piezotolerans (strain WP3 / JCM 13877), this protein is Dihydroorotate dehydrogenase (quinone).